The chain runs to 383 residues: WD repeat-containing protein 55 (383 aa).

The span at 1–11 shows a compositional bias: basic and acidic residues; it reads MDRTCEERPAE. The segment at 1–33 is disordered; that stretch reads MDRTCEERPAEDGSDEEDPDSMEAPTRIRDTPE. Positions 12–21 are enriched in acidic residues; sequence DGSDEEDPDS. Ser-14 carries the post-translational modification Phosphoserine. WD repeat units follow at residues 36–75, 82–121, 125–163, 166–205, 208–247, 250–289, and 293–332; these read VLEAPASGLAFHPARDLLAAGDVDGDVFVFSYSCQEGETK, HHLKACRAVAFSEDGQKLITVSKDKAIHVLDVEQGQLERR, AHGAPINSLLLVDENVLATGDDTGGICLWDQRKEGPLMD, QHEEYIADMALDPAKKLLLTASGDGCLGIFNIKRRRFELL, PQSGDLTSVTLMKWGKKVACGSSEGTIYLFNWNGFGATSD, ALRAESIDCMVPVTESLLCTGSTDGVIRAVNILPNRVVGS, and HTGEPVEELALSHCGRFLASSGHDQRLKFWDMAQLRAVVV. At Ser-354 the chain carries Phosphoserine. The disordered stretch occupies residues 363–383; sequence REEGEDSMAQEEKEETGDDSD. Over residues 365 to 383 the composition is skewed to acidic residues; it reads EGEDSMAQEEKEETGDDSD. Thr-378 is modified (phosphothreonine). At Ser-382 the chain carries Phosphoserine.

This sequence belongs to the WD repeat WDR55 family.

It is found in the nucleus. Its subcellular location is the nucleolus. It localises to the cytoplasm. Functionally, nucleolar protein that acts as a modulator of rRNA synthesis. Plays a central role during organogenesis. In Homo sapiens (Human), this protein is WD repeat-containing protein 55 (WDR55).